A 536-amino-acid chain; its full sequence is Pre-mRNA-splicing regulator female-lethal(2)D (536 aa).

Residues 1-91 (MSVAAMTMDD…LQQQQQQQQQ (91 aa)) form a disordered region. Residues 28–39 (QNLNILNSSQNS) are compositionally biased toward low complexity. Residues 57–69 (HHHHHPHPHHHHH) are compositionally biased toward basic residues. Over residues 72-91 (QQQQQQQQQHLQQQQQQQQQ) the composition is skewed to low complexity. Residues 254–319 (KSFSEEVKKS…KQAIKDEVVA (66 aa)) are a coiled coil. The segment at 424-450 (APRTLPPKKSKLRGITTRRNSQLEEDH) is disordered.

It belongs to the fl(2)d family. Component of the WMM complex, a N6-methyltransferase complex composed of a catalytic subcomplex, named MAC, and of an associated subcomplex, named MACOM. The MAC subcomplex is composed of Ime4/Mettl3 and Mettl14. The MACOM subcomplex is composed of fl(2)d, Flacc/Xio, Hakai, vir, and, in some cases of nito. Interacts with vir and msk. Part of a complex containing fl(2)d, Sxl and vir.

It localises to the nucleus. In terms of biological role, associated component of the WMM complex, a complex that mediates N6-methyladenosine (m6A) methylation of mRNAs, a modification that plays a role in the efficiency of mRNA splicing and is required for sex determination. Required for sex determination and dosage compensation via Sxl alternative splicing: m6A methylation acts as a key regulator of Sxl pre-mRNA and promotes female-specific alternative splicing of Sxl, which determines female physiognomy. M6A methylation is also required for neuronal functions. Required for proper inclusion of regulated exons in Ubx transcripts, leading to isoforms Ia/b and IIa/b. The chain is Pre-mRNA-splicing regulator female-lethal(2)D from Drosophila melanogaster (Fruit fly).